We begin with the raw amino-acid sequence, 454 residues long: F-box/WD-40 repeat-containing protein At3g52030 (454 aa).

In terms of domain architecture, F-box spans 20 to 66 (PTSIESLDADILCIIFSFLDLFDLVHCTVVCNSWNAVIKRLKLLQAS). WD repeat units lie at residues 85-116 (DRPA…RWEA), 117-153 (HSHR…CMEE), 170-214 (SKKL…SIFP), 215-255 (SRAG…CSQI), 258-296 (TQGG…PVAT), 301-340 (ITAG…RLWE), 343-383 (VSPN…VLSR), and 422-454 (KVRP…FNLS).

In Arabidopsis thaliana (Mouse-ear cress), this protein is F-box/WD-40 repeat-containing protein At3g52030.